A 339-amino-acid chain; its full sequence is tRNA dimethylallyltransferase (339 aa).

36–43 is a binding site for ATP; the sequence is GPTGSGKT. 38–43 is a substrate binding site; it reads TGSGKT. The segment at 61–64 is interaction with substrate tRNA; that stretch reads DSMQ.

This sequence belongs to the IPP transferase family. As to quaternary structure, monomer. Mg(2+) serves as cofactor.

The enzyme catalyses adenosine(37) in tRNA + dimethylallyl diphosphate = N(6)-dimethylallyladenosine(37) in tRNA + diphosphate. Catalyzes the transfer of a dimethylallyl group onto the adenine at position 37 in tRNAs that read codons beginning with uridine, leading to the formation of N6-(dimethylallyl)adenosine (i(6)A). This chain is tRNA dimethylallyltransferase, found in Chlamydia trachomatis serovar L2 (strain ATCC VR-902B / DSM 19102 / 434/Bu).